The sequence spans 773 residues: Pentatricopeptide repeat-containing protein At1g76280 (773 aa).

PPR repeat units follow at residues 130-165 (DSRS…RISP), 166-200 (LLPI…RVGK), 201-231 (NGIT…YVNH), 235-269 (DILS…ALRG), 332-369 (LRWS…NLKP), 370-400 (YDST…ISEC), 402-436 (YSYP…KLRP), 524-558 (GTPT…GCPA), 559-593 (DVAT…GFSP), 594-628 (KAVT…EIHL), and 629-663 (DVLS…KVNP).

It belongs to the PPR family. P subfamily.

The protein is Pentatricopeptide repeat-containing protein At1g76280 of Arabidopsis thaliana (Mouse-ear cress).